The chain runs to 1207 residues: Disease resistance protein RPP2B (1207 aa).

The 166-residue stretch at C15–L180 folds into the TIR domain. E89 is an active-site residue. In terms of domain architecture, NB-ARC spans E201 to S445. LRR repeat units lie at residues P607–T630, A653–M676, N677–I699, S720–L743, H744–L767, S769–M791, E792–N815, N840–S862, and L863–L886.

Belongs to the disease resistance TIR-NB-LRR family.

The catalysed reaction is NAD(+) + H2O = ADP-D-ribose + nicotinamide + H(+). In terms of biological role, disease resistance protein that cooperates with RPP2A to confer resistance to Hyaloperonospora parasitica isolate Cala2. This is Disease resistance protein RPP2B from Arabidopsis thaliana (Mouse-ear cress).